A 488-amino-acid chain; its full sequence is MELSFTTSIAVATIVFVLFKLATRPKSNKKLLPEPWRLPIIGHMHHLIGTMPHRGVMDLARKYGSLMHLQLGEVSTIVVSSPKWAKEILTTHDITFANRPETLTGEIIAYHNTDIVLAPYGEYWRQLRKLCTLELLSVKKVKSFQSLREEECWNLVQEVKESGSGRPVDLSENIFKMIATILSRAAFGKGIKDQKEFTEIVKEILRQTGGFDVADIFPSKKFLHHLSGKRARLTSIHKKLDNLINNIVAEHPGNNSSKSNETLLDVMLRLKDSVEFPLTADNVKAIILDMFGAGTDTSSATVEWAISELIRCPRAMEKVQAELRQALKGKDKVKEEDIQDLSYLDLVIKETLRLHPPLPLVMPRECRQPVNLAGYDIANKTKLIVNVFAINRDPEYWKDAESFIPERFENSPITVMGAEYEYLPFGAGRRMCPGAALGLANVQLPLANILYHFNWKLPNGASHDQLDMTESFGATVQRKTHLVLVPSF.

Over 1 to 6 (MELSFT) the chain is Cytoplasmic. Residues 7 to 23 (TSIAVATIVFVLFKLAT) traverse the membrane as a helical; Signal-anchor for type II membrane protein segment. The Lumenal segment spans residues 24–488 (RPKSNKKLLP…KTHLVLVPSF (465 aa)). Residues Asn255, Asn260, and Asn379 are each glycosylated (N-linked (GlcNAc...) asparagine). Cys432 provides a ligand contact to heme.

It belongs to the cytochrome P450 family. Heme serves as cofactor.

It is found in the endoplasmic reticulum membrane. The catalysed reaction is (+)-(R)-germacrene A + 3 reduced [NADPH--hemoprotein reductase] + 3 O2 = germacra-1(10),4,11(13)-trien-12-oate + 3 oxidized [NADPH--hemoprotein reductase] + 4 H2O + 4 H(+). It functions in the pathway secondary metabolite biosynthesis; terpenoid biosynthesis. In terms of biological role, involved in the biosynthesis of germacrene-derived sesquiterpene lactones. Catalyzes three consecutive oxidations of germacrene A to produce germacrene A acid. Could also catalyze the three-step oxidation of non-natural substrate amorphadiene to artemisinic acid. In Saussurea costus (Costus), this protein is Germacrene A hydroxylase.